The sequence spans 147 residues: Austinoid biosynthesis clusters protein H (147 aa).

It belongs to the trt14 isomerase family. In terms of assembly, homodimer.

The protein operates within secondary metabolite biosynthesis; terpenoid biosynthesis. Its function is as follows. Part of the gene cluster B that mediates the biosynthesis of the fungal meroterpenoid acetoxydehydroaustin. The first step of the pathway is the synthesis of 3,5-dimethylorsellinic acid by the polyketide synthase ausA. 3,5-dimethylorsellinic acid is then prenylated by the polyprenyl transferase ausN. Further epoxidation by the FAD-dependent monooxygenase ausM and cyclization by the probable terpene cyclase ausL lead to the formation of protoaustinoid A. Protoaustinoid A is then oxidized to spiro-lactone preaustinoid A3 by the combined action of the FAD-binding monooxygenases ausB and ausC, and the dioxygenase ausE. Acid-catalyzed keto-rearrangement and ring contraction of the tetraketide portion of preaustinoid A3 by ausJ lead to the formation of preaustinoid A4. The aldo-keto reductase ausK, with the help of ausH, is involved in the next step by transforming preaustinoid A4 into isoaustinone which is in turn hydroxylated by the P450 monooxygenase ausI to form austinolide. The cytochrome P450 monooxygenase ausG then modifies austinolide to austinol. Austinol is further acetylated to austin by the O-acetyltransferase ausP, which spontaneously changes to dehydroaustin. The cytochrome P450 monooxygenase then converts dehydroaustin is into 7-dehydrodehydroaustin. The hydroxylation catalyzed by ausR permits the second O-acetyltransferase ausQ to add an additional acetyl group to the molecule, leading to the formation of acetoxydehydroaustin. Due to genetic rearrangements of the clusters and the subsequent loss of some enzymes, the end product of the Penicillium brasilianum austinoid biosynthesis clusters is acetoxydehydroaustin. This is Austinoid biosynthesis clusters protein H from Penicillium brasilianum.